Consider the following 457-residue polypeptide: Multidrug resistance protein NorM (457 aa).

12 consecutive transmembrane segments (helical) span residues 30–50 (FVDT…VSIA), 53–73 (IWLP…PVVA), 93–113 (ILAL…QFII), 126–146 (TVGY…FQAL), 159–179 (AMVI…IFVY), 192–212 (CGVA…FYIV), 242–262 (FPVA…ALLV), 276–296 (ALNF…AVSI), 315–335 (NVGL…TVLF), 348–368 (VVVA…CMDA), 391–411 (FISY…TNWL), and 416–436 (LGAK…ALML).

Belongs to the multi antimicrobial extrusion (MATE) (TC 2.A.66.1) family.

It localises to the cell inner membrane. Functionally, multidrug efflux pump that functions as a Na(+)/drug antiporter. Confers resistance to norfloxacin, ciprofloxacin, ofloxacin, daunomycin, doxorubicin, streptomycin, kanamycin, ethidium bromide and acriflavine. The chain is Multidrug resistance protein NorM (norM) from Vibrio cholerae serotype O1 (strain ATCC 39315 / El Tor Inaba N16961).